Consider the following 210-residue polypeptide: Dephospho-CoA kinase (210 aa).

One can recognise a DPCK domain in the interval 4 to 202 (WVGLTGGIGS…AFYSGIFASK (199 aa)). 12–17 (GSGKSA) lines the ATP pocket.

It belongs to the CoaE family.

The protein localises to the cytoplasm. The catalysed reaction is 3'-dephospho-CoA + ATP = ADP + CoA + H(+). It functions in the pathway cofactor biosynthesis; coenzyme A biosynthesis; CoA from (R)-pantothenate: step 5/5. In terms of biological role, catalyzes the phosphorylation of the 3'-hydroxyl group of dephosphocoenzyme A to form coenzyme A. This is Dephospho-CoA kinase from Neisseria gonorrhoeae.